Reading from the N-terminus, the 353-residue chain is MEHTHAHLAANSSLSWWSPGSACGLGFVPVVYYSLLLCLGLPANILTVIILSQLVARRQKSSYNYLLALAAADILVLFFIVFVDFLLEDFILNMQMPQVPDKIIEVLEFSSIHTSIWITVPLTIDRYIAVCHPLKYHTVSYPARTRKVIVSVYITCFLTSIPYYWWPNIWTEDYISTSVHHVLIWIHCFTVYLVPCSIFFILNSIIVYKLRRKSNFRLRGYSTGKTTAILFTITSIFATLWAPRIIMILYHLYGAPIQNRWLVHIMSDIANMLALLNTAINFFLYCFISKRFRTMAAATLKAFFKCQKQPVQFYTNHNFSITSSPWISPANSHCIKMLVYQYDKNGKPIKVSP.

Residues M1–P29 lie on the Extracellular side of the membrane. N11 carries N-linked (GlcNAc...) asparagine glycosylation. The chain crosses the membrane as a helical span at residues V30 to I50. At L51–Y65 the chain is on the cytoplasmic side. The chain crosses the membrane as a helical span at residues L66–L86. At L87 to K102 the chain is on the extracellular side. Residues I103 to T123 traverse the membrane as a helical segment. Residues I124–V148 are Cytoplasmic-facing. Residues I149–I169 traverse the membrane as a helical segment. The Extracellular portion of the chain corresponds to W170–H181. The helical transmembrane segment at V182 to L202 threads the bilayer. Residues N203 to A228 lie on the Cytoplasmic side of the membrane. A helical membrane pass occupies residues I229–L249. At Y250–D268 the chain is on the extracellular side. A helical membrane pass occupies residues I269 to S289. Over K290–P353 the chain is Cytoplasmic.

This sequence belongs to the G-protein coupled receptor 1 family. In terms of tissue distribution, expressed almost exclusively in the brain. Detected at very low levels in the peripheral tissues.

It localises to the cell membrane. Orphan receptor. Seems to act through a G(q/11)-mediated pathway. The chain is Probable G-protein coupled receptor 139 (GPR139) from Homo sapiens (Human).